A 218-amino-acid chain; its full sequence is Octanoyltransferase (218 aa).

Positions 31 to 206 (REAADEVWLV…QLVKHLDYAE (176 aa)) constitute a BPL/LPL catalytic domain. Substrate-binding positions include 70–77 (RGGQVTYH), 137–139 (SLG), and 150–152 (GLA). Catalysis depends on Cys168, which acts as the Acyl-thioester intermediate.

It belongs to the LipB family.

Its subcellular location is the cytoplasm. The catalysed reaction is octanoyl-[ACP] + L-lysyl-[protein] = N(6)-octanoyl-L-lysyl-[protein] + holo-[ACP] + H(+). It participates in protein modification; protein lipoylation via endogenous pathway; protein N(6)-(lipoyl)lysine from octanoyl-[acyl-carrier-protein]: step 1/2. In terms of biological role, catalyzes the transfer of endogenously produced octanoic acid from octanoyl-acyl-carrier-protein onto the lipoyl domains of lipoate-dependent enzymes. Lipoyl-ACP can also act as a substrate although octanoyl-ACP is likely to be the physiological substrate. The sequence is that of Octanoyltransferase from Pseudomonas savastanoi pv. phaseolicola (strain 1448A / Race 6) (Pseudomonas syringae pv. phaseolicola (strain 1448A / Race 6)).